We begin with the raw amino-acid sequence, 313 residues long: tRNA pseudouridine synthase B (313 aa).

Asp46 functions as the Nucleophile in the catalytic mechanism.

It belongs to the pseudouridine synthase TruB family. Type 1 subfamily.

It carries out the reaction uridine(55) in tRNA = pseudouridine(55) in tRNA. Functionally, responsible for synthesis of pseudouridine from uracil-55 in the psi GC loop of transfer RNAs. This Nitrosospira multiformis (strain ATCC 25196 / NCIMB 11849 / C 71) protein is tRNA pseudouridine synthase B.